Consider the following 696-residue polypeptide: Neurogenic protein big brain (696 aa).

The Cytoplasmic segment spans residues 1–71 (MADESLHTVP…LEFWRSIISE (71 aa)). S46 bears the Phosphoserine mark. T47 is modified (phosphothreonine). Residues 72–93 (CLASFMYVFIVCGAAAGVGVGA) traverse the membrane as a helical segment. Over 94–97 (SVSS) the chain is Extracellular. The helical transmembrane segment at 98–118 (VLLATALASGLAMATLTQCFL) threads the bilayer. Topologically, residues 119 to 143 (HISGAHINPAVTLALCVVRSISPIR) are cytoplasmic. The NPA 1 motif lies at 126–128 (NPA). Residues 144-167 (AAMYITAQCGGGIAGAALLYGVTV) traverse the membrane as a helical segment. Residues 168 to 189 (PGYQGNLQAAISHSAALAAWER) lie on the Extracellular side of the membrane. Residues 190 to 208 (FGVEFILTFLVVLCYFVST) form a helical membrane-spanning segment. Residues 209–213 (DPMKK) are Cytoplasmic-facing. A helical transmembrane segment spans residues 214–234 (FMGNSAASIGCAYSACCFVSM). Topologically, residues 235 to 256 (PYLNPARSLGPSFVLNKWDSHW) are extracellular. The short motif at 238 to 240 (NPA) is the NPA 2 element. A helical transmembrane segment spans residues 257-273 (VYWFGPLVGGMASGLVY). Y273 bears the Phosphotyrosine; by Src mark. The Cytoplasmic portion of the chain corresponds to 274–696 (EYIFNSRNRN…HYGMLPLRPN (423 aa)). A Phosphoserine modification is found at S300. Residues 314-345 (NKYQQSQGTYPRGQSNGNGGGQAAGNGQHQAA) form a disordered region. Y367 is modified (phosphotyrosine; by Abl). Y384 carries the phosphotyrosine; by Src modification. Phosphoserine is present on S394. Disordered stretches follow at residues 436–634 (MRTQ…KVSA) and 650–696 (TSQG…LRPN). Low complexity-rich tracts occupy residues 439 to 451 (QQQQQQQQQQQQQ) and 462 to 472 (QNQNVQNQMQQ). Y478 is modified (phosphotyrosine; by Src). Positions 487-532 (QQQPIQQQQQQQQQQQLQQQQPNMGVQQQQMQPPPQMMSDPQQQPQ) are enriched in low complexity. Basic and acidic residues predominate over residues 549–558 (GNHKYDRRDP). A Phosphoserine modification is found at S576. A compositionally biased stretch (low complexity) spans 576–587 (SDDSSYGSYHGS). Residues 599 to 616 (EPSPPPPPMLMYAPPPQP) show a composition bias toward pro residues. Y610 carries the post-translational modification Phosphotyrosine; by Abl. A compositionally biased stretch (low complexity) spans 659 to 686 (QQQQQQQQQQQQQQQQQQQQMMMQQQQQ).

Belongs to the MIP/aquaporin (TC 1.A.8) family. Post-translationally, phosphorylated at its C-terminus. Detected in all tissues with neurogenic abilities, for example the neurogenic ectoderm.

It localises to the membrane. In terms of biological role, essential for proper differentiation of ectoderm. Acts synergistically with neurogenic locus proteins Notch and Delta during the separation of neural and epidermal cell lineages in response to the lateral inhibition signal. Voltage-insensitive monovalent cation channel. Ion transport is blocked by the presence of divalent cations. The sequence is that of Neurogenic protein big brain (bib) from Drosophila melanogaster (Fruit fly).